Reading from the N-terminus, the 208-residue chain is MKIKTSDIVMSAVAPKQYPEEGLPEIALAGRSNVGKSSLINTILNRKKLARVSSSPGKTRTLNFYLINKEFHLVDLPGYGYARVSKGEKSSWGKMLETYLSNRPNLYEVVLLIDIRHEPSEQDQQMYQWIRHYGYGTIVVATKSDKIARSQHQKHFKMIRDTLGMSPEDRLIPISSLKKLGIEQLWGALEDIFVENELPITIEKEAPK.

Residues 22–195 form the EngB-type G domain; sequence GLPEIALAGR…WGALEDIFVE (174 aa). Residues 30–37, 57–61, 75–78, 142–145, and 174–176 each bind GTP; these read GRSNVGKS, GKTRT, DLPG, TKSD, and ISS. Mg(2+) is bound by residues Ser37 and Thr59.

The protein belongs to the TRAFAC class TrmE-Era-EngA-EngB-Septin-like GTPase superfamily. EngB GTPase family. The cofactor is Mg(2+).

Functionally, necessary for normal cell division and for the maintenance of normal septation. The chain is Probable GTP-binding protein EngB from Alkaliphilus metalliredigens (strain QYMF).